We begin with the raw amino-acid sequence, 299 residues long: DNA repair protein RecO (299 aa).

A disordered region spans residues 1–62 (MTLNSDADPD…GRRAPRTPAS (62 aa)). The segment covering 25-41 (ASKPARSTRKSSSAKSA) has biased composition (low complexity).

The protein belongs to the RecO family.

Functionally, involved in DNA repair and RecF pathway recombination. The chain is DNA repair protein RecO from Paraburkholderia xenovorans (strain LB400).